The primary structure comprises 194 residues: Protein GrpE (194 aa).

2 stretches are compositionally biased toward basic and acidic residues: residues 1-19 (MSKEEFPSEKNLDKEENTS) and 26-44 (KKEAAKGEETKKNNENQKL). Residues 1 to 44 (MSKEEFPSEKNLDKEENTSKPKKAVKKEAAKGEETKKNNENQKL) form a disordered region.

The protein belongs to the GrpE family. Homodimer.

The protein localises to the cytoplasm. Functionally, participates actively in the response to hyperosmotic and heat shock by preventing the aggregation of stress-denatured proteins, in association with DnaK and GrpE. It is the nucleotide exchange factor for DnaK and may function as a thermosensor. Unfolded proteins bind initially to DnaJ; upon interaction with the DnaJ-bound protein, DnaK hydrolyzes its bound ATP, resulting in the formation of a stable complex. GrpE releases ADP from DnaK; ATP binding to DnaK triggers the release of the substrate protein, thus completing the reaction cycle. Several rounds of ATP-dependent interactions between DnaJ, DnaK and GrpE are required for fully efficient folding. In Lactobacillus acidophilus (strain ATCC 700396 / NCK56 / N2 / NCFM), this protein is Protein GrpE.